The primary structure comprises 259 residues: uncharacterized protein (259 aa).

The N-terminal stretch at 1-28 is a signal peptide; it reads MNIKRRLKYLTSCLLVSAFFWINSSAWA. The next 2 helical transmembrane spans lie at 32-52 and 191-211; these read EIPPSAPWVIYLGGFGGIYVA and WGFLVGFGLGYDFCPWFGIFT.

It is found in the cell membrane. This is an uncharacterized protein from Coxiella burnetii (strain RSA 493 / Nine Mile phase I).